Here is a 95-residue protein sequence, read N- to C-terminus: Small ribosomal subunit protein bS6 (95 aa).

This sequence belongs to the bacterial ribosomal protein bS6 family.

Functionally, binds together with bS18 to 16S ribosomal RNA. In Aster yellows witches'-broom phytoplasma (strain AYWB), this protein is Small ribosomal subunit protein bS6.